We begin with the raw amino-acid sequence, 443 residues long: Sensor histidine protein kinase HK06 (443 aa).

The next 2 helical transmembrane spans lie at 16–36 (FAILGGVGLVIHIAIYLTFPF) and 140–160 (ILLLYLPYTFLVTIAFSFVFS). Positions 165–217 (KRLLNPLFYISEVTSKMQDLDDNIRFDESRKDEVGEVGKQINGMYEHLLKVIH) constitute an HAMP domain. The Histidine kinase domain maps to 239–443 (GASHELKTPL…EHGMEFKISL (205 aa)). H242 carries the phosphohistidine; by autocatalysis modification.

It is found in the cell membrane. The catalysed reaction is ATP + protein L-histidine = ADP + protein N-phospho-L-histidine.. Its function is as follows. Member of the two-component regulatory system HK06/RR06 involved in regulation of target genes, including choline-binding protein CbpA. Has been shown in one study to not be required for regulation of expression of choline-binding protein CbpA. This Streptococcus pneumoniae serotype 2 (strain D39 / NCTC 7466) protein is Sensor histidine protein kinase HK06.